A 148-amino-acid polypeptide reads, in one-letter code: Snaclec 27 (148 aa).

The signal sequence occupies residues 1–23 (WGDSSSSASACWSCFSLVSGIGA). 3 disulfide bridges follow: Cys27–Cys38, Cys55–Cys144, and Cys121–Cys136. A C-type lectin domain is found at 34–145 (HEGHCYKVFS…CSSTQQFVCK (112 aa)).

This sequence belongs to the snaclec family. In terms of assembly, heterodimer; disulfide-linked. As to expression, expressed by the venom gland.

Its subcellular location is the secreted. Its function is as follows. Interferes with one step of hemostasis (modulation of platelet aggregation, or coagulation cascade, for example). The protein is Snaclec 27 of Echis ocellatus (Ocellated saw-scaled viper).